A 98-amino-acid polypeptide reads, in one-letter code: Integration host factor subunit alpha (98 aa).

Residues Phe52–Ile73 are disordered. Residues Leu54–Ile73 show a composition bias toward basic and acidic residues.

It belongs to the bacterial histone-like protein family. Heterodimer of an alpha and a beta chain.

This protein is one of the two subunits of integration host factor, a specific DNA-binding protein that functions in genetic recombination as well as in transcriptional and translational control. The sequence is that of Integration host factor subunit alpha from Pseudoalteromonas atlantica (strain T6c / ATCC BAA-1087).